A 213-amino-acid polypeptide reads, in one-letter code: Protein PAE0745 (213 aa).

The region spanning 8 to 201 (EEGTFLVRLA…EKSPGGEVYE (194 aa)) is the AMMECR1 domain.

This chain is Protein PAE0745, found in Pyrobaculum aerophilum (strain ATCC 51768 / DSM 7523 / JCM 9630 / CIP 104966 / NBRC 100827 / IM2).